A 146-amino-acid polypeptide reads, in one-letter code: Anti-sigma F factor (146 aa).

The protein belongs to the anti-sigma-factor family.

The catalysed reaction is L-seryl-[protein] + ATP = O-phospho-L-seryl-[protein] + ADP + H(+). It catalyses the reaction L-threonyl-[protein] + ATP = O-phospho-L-threonyl-[protein] + ADP + H(+). Its function is as follows. Binds to sigma F and blocks its ability to form an RNA polymerase holoenzyme (E-sigma F). Phosphorylates SpoIIAA on a serine residue. This phosphorylation may enable SpoIIAA to act as an anti-anti-sigma factor that counteracts SpoIIAB and thus releases sigma F from inhibition. This chain is Anti-sigma F factor, found in Bacillus velezensis (strain DSM 23117 / BGSC 10A6 / LMG 26770 / FZB42) (Bacillus amyloliquefaciens subsp. plantarum).